Here is a 348-residue protein sequence, read N- to C-terminus: N-acetyl-gamma-glutamyl-phosphate reductase (348 aa).

Cys149 is an active-site residue.

This sequence belongs to the NAGSA dehydrogenase family. Type 1 subfamily.

The protein localises to the cytoplasm. It carries out the reaction N-acetyl-L-glutamate 5-semialdehyde + phosphate + NADP(+) = N-acetyl-L-glutamyl 5-phosphate + NADPH + H(+). It participates in amino-acid biosynthesis; L-arginine biosynthesis; N(2)-acetyl-L-ornithine from L-glutamate: step 3/4. Catalyzes the NADPH-dependent reduction of N-acetyl-5-glutamyl phosphate to yield N-acetyl-L-glutamate 5-semialdehyde. The protein is N-acetyl-gamma-glutamyl-phosphate reductase of Cellvibrio japonicus (strain Ueda107) (Pseudomonas fluorescens subsp. cellulosa).